The primary structure comprises 131 residues: Small ribosomal subunit protein uS8 (131 aa).

The protein belongs to the universal ribosomal protein uS8 family. Part of the 30S ribosomal subunit. Contacts proteins S5 and S12.

Its function is as follows. One of the primary rRNA binding proteins, it binds directly to 16S rRNA central domain where it helps coordinate assembly of the platform of the 30S subunit. The polypeptide is Small ribosomal subunit protein uS8 (Bacteroides thetaiotaomicron (strain ATCC 29148 / DSM 2079 / JCM 5827 / CCUG 10774 / NCTC 10582 / VPI-5482 / E50)).